The chain runs to 481 residues: Argininosuccinate lyase (481 aa).

It belongs to the lyase 1 family. Argininosuccinate lyase subfamily.

It is found in the cytoplasm. It carries out the reaction 2-(N(omega)-L-arginino)succinate = fumarate + L-arginine. It participates in amino-acid biosynthesis; L-arginine biosynthesis; L-arginine from L-ornithine and carbamoyl phosphate: step 3/3. The protein is Argininosuccinate lyase of Methanococcus maripaludis (strain C6 / ATCC BAA-1332).